The primary structure comprises 359 residues: CDP-glucose 4,6-dehydratase (359 aa).

The protein belongs to the NAD(P)-dependent epimerase/dehydratase family. Requires NAD(+) as cofactor.

The enzyme catalyses CDP-D-glucose = CDP-4-dehydro-6-deoxy-D-glucose + H2O. The protein operates within nucleotide-sugar biosynthesis; CDP-3,6-dideoxy-D-mannose biosynthesis; CDP-3,6-dideoxy-D-mannose from CTP and alpha-D-glucose 1-phosphate: step 2/5. It functions in the pathway bacterial outer membrane biogenesis; LPS O-antigen biosynthesis. The sequence is that of CDP-glucose 4,6-dehydratase (rfbG) from Salmonella typhimurium (strain LT2 / SGSC1412 / ATCC 700720).